The following is an 81-amino-acid chain: Putative membrane protein insertion efficiency factor (81 aa).

This sequence belongs to the UPF0161 family.

The protein resides in the cell inner membrane. Functionally, could be involved in insertion of integral membrane proteins into the membrane. The chain is Putative membrane protein insertion efficiency factor from Thermosipho melanesiensis (strain DSM 12029 / CIP 104789 / BI429).